The chain runs to 385 residues: Prostacyclin receptor (385 aa).

Over 1–16 the chain is Extracellular; that stretch reads MADSCRNLTYVRDSVG. Disulfide bonds link C5/C165 and C92/C170. N7 is a glycosylation site (N-linked (GlcNAc...) asparagine). The chain crosses the membrane as a helical span at residues 17 to 38; sequence PATSTLMFVAGVVGNGLALGIL. At 39-51 the chain is on the cytoplasmic side; it reads GARRHSRPSAFAV. Residues 52–76 traverse the membrane as a helical segment; the sequence is LVTGLGVTDLLGTCFLSPAVFAAYA. Topologically, residues 77 to 94 are extracellular; sequence RNSSLLGLARGRPALCDA. Residues 95 to 115 form a helical membrane-spanning segment; it reads FAFAMTFFGLASTLILFAMAV. Topologically, residues 116-134 are cytoplasmic; that stretch reads ERCLALSHPYLYAQLDGPR. A helical membrane pass occupies residues 135–158; sequence RARLALPAIYAFCTIFCSLPFLGL. Topologically, residues 159-181 are extracellular; the sequence is GQHQQYCPGSWCFIRMRSAEPGG. A helical membrane pass occupies residues 182–208; it reads CAFLLAYASLVALLVAAIVLCNGSVTL. Residues 209–234 lie on the Cytoplasmic side of the membrane; sequence SLCRMYRQQRRHQARCPRPRAGEDEV. A helical transmembrane segment spans residues 235–259; that stretch reads DHLILLALMTGIMAVCSLPLTPQIR. Over 260 to 273 the chain is Extracellular; sequence GFTQAIAPDSSEMG. The helical transmembrane segment at 274 to 294 threads the bilayer; it reads DLLAFRFNAFNPILDPWVFIL. Over 295–385 the chain is Cytoplasmic; the sequence is FRKSVFQRLK…AGSEAACSLC (91 aa). The interval 315 to 344 is disordered; that stretch reads AQGDSRTSLSQSASGRKDSSAPPALEGKKG. The segment covering 318-328 has biased composition (polar residues); that stretch reads DSRTSLSQSAS. Cysteine methyl ester is present on C382. Residue C382 is the site of S-farnesyl cysteine attachment. Residues 383-385 constitute a propeptide, removed in mature form; it reads SLC.

The protein belongs to the G-protein coupled receptor 1 family. In terms of assembly, interacts (non-isoprenylated C-terminus) with PDZK1. In terms of processing, isoprenylation does not influence ligand binding but is required for efficient coupling to the effectors adenylyl cyclase and phospholipase C.

The protein localises to the cell membrane. Receptor for prostacyclin (prostaglandin I2 or PGI2). The activity of this receptor is mediated by G(s) proteins which activate adenylate cyclase. The polypeptide is Prostacyclin receptor (PTGIR) (Bos taurus (Bovine)).